A 229-amino-acid polypeptide reads, in one-letter code: High molecular weight rubredoxin (229 aa).

The interval 1-158 (MDTKALHTLT…YYHQVKRGTT (158 aa)) is flavodoxin-reductase-like. The 52-residue stretch at 178-229 (SPKYQCTICNYVYDPVQGDPEHGIAPGTPFADLPEDWTCPICGAGKDAFEQI) folds into the Rubredoxin-like domain. Fe cation contacts are provided by cysteine 183, cysteine 186, cysteine 216, and cysteine 219.

In the N-terminal section; belongs to the flavodoxin reductase family. In terms of assembly, homodimer. Fe cation serves as cofactor. Requires FMN as cofactor.

In terms of biological role, has nitric oxide reductase activity in combination with FprA; probably involved in nitrosative stress protection. Acts as an NADH:FprA oxidoreductase. The protein is High molecular weight rubredoxin (hrb) of Moorella thermoacetica (strain ATCC 39073 / JCM 9320).